The sequence spans 708 residues: Capsid scaffolding protein (708 aa).

Catalysis depends on charge relay system residues His63, Ser132, and His157. Disordered stretches follow at residues Ala269–Pro339, His455–Arg565, and Ala593–Gly619. Residues Pro284 to Ser293 are compositionally biased toward low complexity. The span at Ser294 to Pro311 shows a compositional bias: pro residues. Positions Ser326–Pro339 are enriched in low complexity. Positions Ala333–Gly352 are interaction with pAP. Over residues Lys498 to Lys513 the composition is skewed to basic residues. 2 consecutive short sequence motifs (nuclear localization signal) follow at residues Lys510–Thr515 and Arg537–Lys543. A compositionally biased stretch (low complexity) spans Ala593–Thr611. An interaction with major capsid protein region spans residues Pro688 to Glu708.

It belongs to the herpesviridae capsid scaffolding protein family. As to quaternary structure, homomultimer. Interacts with major capsid protein. Exists in a monomer-dimer equilibrium with the dimer being the active species. Post-translationally, capsid scaffolding protein is cleaved by assemblin after formation of the spherical procapsid. As a result, the capsid obtains its mature, icosahedral shape. Cleavages occur at two or more sites: release (R-site) and maturation (M-site).

Its subcellular location is the host cytoplasm. The protein localises to the host nucleus. It catalyses the reaction Cleaves -Ala-|-Ser- and -Ala-|-Ala- bonds in the scaffold protein.. Acts as a scaffold protein by binding major capsid protein in the cytoplasm, inducing the nuclear localization of both proteins. Multimerizes in the nucleus such as major capsid protein forms the icosahedral T=16 capsid. Autocatalytic cleavage releases the assembly protein, and subsequently abolishes interaction with major capsid protein. Cleavages products are evicted from the capsid before or during DNA packaging. Functionally, protease that plays an essential role in virion assembly within the nucleus. Catalyzes the cleavage of the assembly protein after formation of the spherical procapsid. By that cleavage, the capsid matures and gains its icosahedral shape. The cleavage sites seem to include -Ala-Ser-, -Ala-Ala-, as well as Ala-Thr bonds. Assemblin and cleavages products are evicted from the capsid before or during DNA packaging. In terms of biological role, plays a major role in capsid assembly. Acts as a scaffold protein by binding major capsid protein. Multimerizes in the nucleus such as major capsid protein forms the icosahedral T=16 capsid. Cleaved by assemblin after capsid completion. The cleavages products are evicted from the capsid before or during DNA packaging. This is Capsid scaffolding protein (UL80) from Homo sapiens (Human).